Here is a 334-residue protein sequence, read N- to C-terminus: Glycerol-3-phosphate dehydrogenase [NAD(P)+] (334 aa).

NADPH-binding residues include Ser-13, Phe-14, and Lys-108. The sn-glycerol 3-phosphate site is built by Lys-108, Gly-137, and Thr-139. Ala-141 serves as a coordination point for NADPH. Residues Lys-193, Asp-246, Ser-256, Arg-257, and Asn-258 each contribute to the sn-glycerol 3-phosphate site. The active-site Proton acceptor is the Lys-193. Arg-257 provides a ligand contact to NADPH. Val-281 and Glu-283 together coordinate NADPH.

It belongs to the NAD-dependent glycerol-3-phosphate dehydrogenase family.

The protein localises to the cytoplasm. The enzyme catalyses sn-glycerol 3-phosphate + NAD(+) = dihydroxyacetone phosphate + NADH + H(+). The catalysed reaction is sn-glycerol 3-phosphate + NADP(+) = dihydroxyacetone phosphate + NADPH + H(+). It functions in the pathway membrane lipid metabolism; glycerophospholipid metabolism. Catalyzes the reduction of the glycolytic intermediate dihydroxyacetone phosphate (DHAP) to sn-glycerol 3-phosphate (G3P), the key precursor for phospholipid synthesis. The polypeptide is Glycerol-3-phosphate dehydrogenase [NAD(P)+] (Bartonella tribocorum (strain CIP 105476 / IBS 506)).